Reading from the N-terminus, the 381-residue chain is MVNRISILGSTGSIGVQTLDVARNLNIKVDGLAANKNIDLLEKQAREFQPKIVAVKDEERARILRDRLSDTDCKVVGGVEGLKMVASIETVETVVTSIVGIAGLIPTMEAIKHKKNIALANKETLVTAGHIVMSEAARMGVKILPVDSEHSAVFQSLMGNNKKDVAKIILTASGGPFRGRKKEELRNVTLREALNHPNWSMGSKITIDSATMMNKGLEVIEAHWLFEIPQDDIEVLVHPQSIIHSMVEYKDGSIIAQLGSPDMRLPIQFALTYPDRKQNNFSKLDIVKIGSLTFEAPDLEAFPCLGLAFEALRAGGTMPAVLNAANEKAVGLFLQEKIRFLDIPEIIEKVMGRHSVKPDPDIDDIIDVDLWARKIVEEIVK.

Threonine 11, glycine 12, serine 13, isoleucine 14, lysine 36, asparagine 37, and asparagine 121 together coordinate NADPH. Residue lysine 122 coordinates 1-deoxy-D-xylulose 5-phosphate. Glutamate 123 provides a ligand contact to NADPH. Aspartate 147 lines the Mn(2+) pocket. 4 residues coordinate 1-deoxy-D-xylulose 5-phosphate: serine 148, glutamate 149, serine 173, and histidine 196. Residue glutamate 149 participates in Mn(2+) binding. Residue glycine 202 coordinates NADPH. Positions 209, 214, 215, and 218 each coordinate 1-deoxy-D-xylulose 5-phosphate. Glutamate 218 provides a ligand contact to Mn(2+).

This sequence belongs to the DXR family. It depends on Mg(2+) as a cofactor. Requires Mn(2+) as cofactor.

The catalysed reaction is 2-C-methyl-D-erythritol 4-phosphate + NADP(+) = 1-deoxy-D-xylulose 5-phosphate + NADPH + H(+). Its pathway is isoprenoid biosynthesis; isopentenyl diphosphate biosynthesis via DXP pathway; isopentenyl diphosphate from 1-deoxy-D-xylulose 5-phosphate: step 1/6. Catalyzes the NADPH-dependent rearrangement and reduction of 1-deoxy-D-xylulose-5-phosphate (DXP) to 2-C-methyl-D-erythritol 4-phosphate (MEP). The sequence is that of 1-deoxy-D-xylulose 5-phosphate reductoisomerase from Acetivibrio thermocellus (strain ATCC 27405 / DSM 1237 / JCM 9322 / NBRC 103400 / NCIMB 10682 / NRRL B-4536 / VPI 7372) (Clostridium thermocellum).